The primary structure comprises 175 residues: uncharacterized protein (175 aa).

Residues 35–56 (LIENSNYDNNNINNNNNNNNTD) show a composition bias toward low complexity. Residues 35–70 (LIENSNYDNNNINNNNNNNNTDNDNDNNNDNEPFYN) are disordered. 2 consecutive transmembrane segments (helical) span residues 106 to 126 (ILSF…FFNY) and 132 to 152 (YFII…KSIF).

The protein resides in the membrane. This is an uncharacterized protein from Dictyostelium discoideum (Social amoeba).